A 411-amino-acid chain; its full sequence is Na(+)-translocating NADH-quinone reductase subunit F (411 aa).

The chain crosses the membrane as a helical span at residues 5-25; it reads VILALGIAAFTVIVLVLVAII. A 2Fe-2S ferredoxin-type domain is found at 36–130; that stretch reads GDITIGINDD…NMEVELPEEI (95 aa). [2Fe-2S] cluster is bound by residues Cys73, Cys79, Cys82, and Cys114. The FAD-binding FR-type domain maps to 133–273; that stretch reads VKKWECTVIS…SGPFGEFFAK (141 aa).

This sequence belongs to the NqrF family. In terms of assembly, composed of six subunits; NqrA, NqrB, NqrC, NqrD, NqrE and NqrF. [2Fe-2S] cluster is required as a cofactor. Requires FAD as cofactor.

The protein localises to the cell inner membrane. It carries out the reaction a ubiquinone + n Na(+)(in) + NADH + H(+) = a ubiquinol + n Na(+)(out) + NAD(+). Functionally, NQR complex catalyzes the reduction of ubiquinone-1 to ubiquinol by two successive reactions, coupled with the transport of Na(+) ions from the cytoplasm to the periplasm. The first step is catalyzed by NqrF, which accepts electrons from NADH and reduces ubiquinone-1 to ubisemiquinone by a one-electron transfer pathway. This Haemophilus influenzae (strain PittEE) protein is Na(+)-translocating NADH-quinone reductase subunit F.